Reading from the N-terminus, the 292-residue chain is Phosphoenolpyruvate guanylyltransferase (292 aa).

Residues threonine 168, glycine 184, and serine 187 each coordinate phosphoenolpyruvate. Residues 243 to 292 (PLVAEDSGGSGGESGTSAESGLSVPPGIVGGTQRRIVSDASGPGRAKKYP) form a disordered region.

It belongs to the CofC family.

The enzyme catalyses phosphoenolpyruvate + GTP + H(+) = enolpyruvoyl-2-diphospho-5'-guanosine + diphosphate. It functions in the pathway cofactor biosynthesis; coenzyme F420 biosynthesis. In terms of biological role, guanylyltransferase that catalyzes the activation of phosphoenolpyruvate (PEP) as enolpyruvoyl-2-diphospho-5'-guanosine, via the condensation of PEP with GTP. It is involved in the biosynthesis of coenzyme F420, a hydride carrier cofactor. The chain is Phosphoenolpyruvate guanylyltransferase from Frankia casuarinae (strain DSM 45818 / CECT 9043 / HFP020203 / CcI3).